The following is a 327-amino-acid chain: D-alanine--D-alanine ligase (327 aa).

One can recognise an ATP-grasp domain in the interval 113–312; it reads KRLWMTHGLA…YEDFVLQVLA (200 aa). Position 139–194 (139–194) interacts with ATP; sequence VADLGLPLIVKPAREGSSIGLTKVTAADQMRAAFDKAAALDNDVIAETFVDGAELT. 3 residues coordinate Mg(2+): Asp266, Glu279, and Asn281.

Belongs to the D-alanine--D-alanine ligase family. Mg(2+) serves as cofactor. The cofactor is Mn(2+).

It is found in the cytoplasm. The catalysed reaction is 2 D-alanine + ATP = D-alanyl-D-alanine + ADP + phosphate + H(+). It functions in the pathway cell wall biogenesis; peptidoglycan biosynthesis. Its function is as follows. Cell wall formation. This chain is D-alanine--D-alanine ligase, found in Cupriavidus taiwanensis (strain DSM 17343 / BCRC 17206 / CCUG 44338 / CIP 107171 / LMG 19424 / R1) (Ralstonia taiwanensis (strain LMG 19424)).